Here is a 253-residue protein sequence, read N- to C-terminus: uncharacterized protein (253 aa).

A compositionally biased stretch (low complexity) spans 1–14 (MKVPILSRLRSLSS). 2 disordered regions span residues 1–192 (MKVP…PKSS) and 212–253 (PETV…AIQL). Composition is skewed to basic and acidic residues over residues 17-30 (RNNE…EHQV) and 45-60 (KSDK…KSGE). Low complexity-rich tracts occupy residues 63–104 (PSTP…GSDS) and 111–154 (KTLS…QTPR). Residues 215–235 (VVTSTPRQQSRPPSAQNTPNF) show a composition bias toward polar residues. The segment covering 236-253 (TSQGGSRSTSRRQSAIQL) has biased composition (low complexity).

This is an uncharacterized protein from Dictyostelium discoideum (Social amoeba).